The following is a 297-amino-acid chain: MSPMPALIEEGRAKVNLSLRVVGRRADGYHDLESVVAFADCADRLTLEPGGELKLATTGPLAAACGDTADNLVFKAAKLLAEAVPNLKLGAFALDKVLPVAAGIGGGSADAAAALRLLARLNNLSLDDPRLQKVALATGADVPVCLYSRACDMTGVGEQLLPLALPSMPCVMVNPRVPVATKDVFQALGLRNGELLVGATSVIGAPAWPEEGASIADWVEVLETVANDLEAPAMRIEPVIGEVLEALRDSAGVKLARMSGSGATCFAIYGAPAEAHAAAEKIRRDHPGWWVHAGTLS.

K14 is a catalytic residue. 99-109 (PVAAGIGGGSA) lines the ATP pocket. The active site involves D141.

This sequence belongs to the GHMP kinase family. IspE subfamily.

The enzyme catalyses 4-CDP-2-C-methyl-D-erythritol + ATP = 4-CDP-2-C-methyl-D-erythritol 2-phosphate + ADP + H(+). It functions in the pathway isoprenoid biosynthesis; isopentenyl diphosphate biosynthesis via DXP pathway; isopentenyl diphosphate from 1-deoxy-D-xylulose 5-phosphate: step 3/6. Functionally, catalyzes the phosphorylation of the position 2 hydroxy group of 4-diphosphocytidyl-2C-methyl-D-erythritol. The protein is 4-diphosphocytidyl-2-C-methyl-D-erythritol kinase of Bradyrhizobium diazoefficiens (strain JCM 10833 / BCRC 13528 / IAM 13628 / NBRC 14792 / USDA 110).